The primary structure comprises 383 residues: Putative glutamate--cysteine ligase 2-1 (383 aa).

The protein belongs to the glutamate--cysteine ligase type 2 family. YbdK subfamily.

It catalyses the reaction L-cysteine + L-glutamate + ATP = gamma-L-glutamyl-L-cysteine + ADP + phosphate + H(+). In terms of biological role, ATP-dependent carboxylate-amine ligase which exhibits weak glutamate--cysteine ligase activity. This is Putative glutamate--cysteine ligase 2-1 from Arthrobacter sp. (strain FB24).